The primary structure comprises 88 residues: UPF0297 protein BPUM_2379 (88 aa).

The protein belongs to the UPF0297 family.

The polypeptide is UPF0297 protein BPUM_2379 (Bacillus pumilus (strain SAFR-032)).